The primary structure comprises 147 residues: Mediator of RNA polymerase II transcription subunit 10 (147 aa).

The protein belongs to the Mediator complex subunit 10 family. As to quaternary structure, component of the Mediator complex.

It is found in the nucleus. Functionally, component of the Mediator complex, a coactivator involved in the regulated transcription of nearly all RNA polymerase II-dependent genes. Mediator functions as a bridge to convey information from gene-specific regulatory proteins to the basal RNA polymerase II transcription machinery. Mediator is recruited to promoters by direct interactions with regulatory proteins and serves as a scaffold for the assembly of a functional preinitiation complex with RNA polymerase II and the general transcription factors. The sequence is that of Mediator of RNA polymerase II transcription subunit 10 (NUT2) from Debaryomyces hansenii (strain ATCC 36239 / CBS 767 / BCRC 21394 / JCM 1990 / NBRC 0083 / IGC 2968) (Yeast).